Reading from the N-terminus, the 607-residue chain is Elongation factor 4 (607 aa).

The tr-type G domain occupies 11-193 (KNIRNFSIIA…KIVETIPAPS (183 aa)). GTP-binding positions include 23–28 (DHGKST) and 140–143 (NKID).

The protein belongs to the TRAFAC class translation factor GTPase superfamily. Classic translation factor GTPase family. LepA subfamily.

The protein localises to the cell membrane. The catalysed reaction is GTP + H2O = GDP + phosphate + H(+). In terms of biological role, required for accurate and efficient protein synthesis under certain stress conditions. May act as a fidelity factor of the translation reaction, by catalyzing a one-codon backward translocation of tRNAs on improperly translocated ribosomes. Back-translocation proceeds from a post-translocation (POST) complex to a pre-translocation (PRE) complex, thus giving elongation factor G a second chance to translocate the tRNAs correctly. Binds to ribosomes in a GTP-dependent manner. The sequence is that of Elongation factor 4 from Staphylococcus carnosus (strain TM300).